The primary structure comprises 410 residues: Probable intron-encoded endonuclease bI1 (410 aa).

A COB exon 1 encoded region spans residues 1–131; it reads MRLLKTHPIL…VLMMAIAFLG (131 aa). A run of 3 helical transmembrane segments spans residues 32 to 52, 75 to 95, and 112 to 132; these read FGSLLGVCLIIQILTGVFLAM, GWLIRYLHANTASFFFIFVYL, and LLWSIGVIILVLMMAIAFLGF. Residues 132-410 form a COB intron 1 encoded region; sequence FNGQKYMCFY…KKNYIVKVIK (279 aa). The GIY-YIG domain occupies 196–286; it reads PFSGIYMIVN…LETLKPEYNI (91 aa).

To endonucleases of group I introns of fungi and phage. The mature protein may arise from proteolytic cleavage of an in-frame translation of COB exon 1 plus intron 1, containing the bI1 open reading frame.

Its subcellular location is the mitochondrion. It is found in the membrane. Mitochondrial DNA endonuclease involved in intron homing. The chain is Probable intron-encoded endonuclease bI1 (bI1) from Mycosarcoma maydis (Corn smut fungus).